Reading from the N-terminus, the 154-residue chain is SsrA-binding protein (154 aa).

The segment at 134–154 (QREDLKRRAEDRDTQRELARF) is disordered.

The protein belongs to the SmpB family.

Its subcellular location is the cytoplasm. Its function is as follows. Required for rescue of stalled ribosomes mediated by trans-translation. Binds to transfer-messenger RNA (tmRNA), required for stable association of tmRNA with ribosomes. tmRNA and SmpB together mimic tRNA shape, replacing the anticodon stem-loop with SmpB. tmRNA is encoded by the ssrA gene; the 2 termini fold to resemble tRNA(Ala) and it encodes a 'tag peptide', a short internal open reading frame. During trans-translation Ala-aminoacylated tmRNA acts like a tRNA, entering the A-site of stalled ribosomes, displacing the stalled mRNA. The ribosome then switches to translate the ORF on the tmRNA; the nascent peptide is terminated with the 'tag peptide' encoded by the tmRNA and targeted for degradation. The ribosome is freed to recommence translation, which seems to be the essential function of trans-translation. In Nitratidesulfovibrio vulgaris (strain ATCC 29579 / DSM 644 / CCUG 34227 / NCIMB 8303 / VKM B-1760 / Hildenborough) (Desulfovibrio vulgaris), this protein is SsrA-binding protein.